The primary structure comprises 282 residues: DNA-dependent metalloprotease WSS1 homolog 2 (282 aa).

One can recognise a Ubiquitin-like domain in the interval 1-75 (MELKFSCRGN…CLIRQDKDIV (75 aa)). A WLM domain is found at 99-274 (PHTTPKPASI…LLAAAERRKQ (176 aa)). H202 contributes to the Zn(2+) binding site. Residue E203 is part of the active site. Zn(2+) contacts are provided by H206 and H212. Residues 234–282 (GKPGSYVSDRASYTPQQDNDDEDQKNHRRDLLLAAAERRKQSGSKVQKE) form a disordered region. A compositionally biased stretch (basic and acidic residues) spans 269–282 (AERRKQSGSKVQKE).

It belongs to the peptidase M3 family. WSS1-like metalloprotease (WLM) subfamily. Requires Zn(2+) as cofactor.

It localises to the cytoplasm. The protein resides in the nucleus. Metalloendopeptidase that acts selectively on DNA-binding proteins. DNA is needed to bring the protease and substrates together to enable proteolysis. Involved in the repair of toxic DNA-protein cross-links (DPCs) such as covalently trapped topoisomerase 1 (TOP1) adducts on DNA lesions or DPCs induced by reactive compounds such as formaldehyde. The sequence is that of DNA-dependent metalloprotease WSS1 homolog 2 from Schizosaccharomyces pombe (strain 972 / ATCC 24843) (Fission yeast).